A 289-amino-acid polypeptide reads, in one-letter code: Purine nucleoside phosphorylase (289 aa).

Methionine 1 is subject to N-acetylmethionine. Residues serine 33, histidine 64, and 84-86 each bind phosphate; that span reads RFH. A purine D-ribonucleoside is bound at residue tyrosine 88. Residue alanine 116 participates in phosphate binding. A purine D-ribonucleoside contacts are provided by glutamate 201 and methionine 219. A phosphate-binding site is contributed by serine 220. A purine D-ribonucleoside is bound at residue asparagine 243. Phosphoserine is present on serine 251. Histidine 257 is an a purine D-ribonucleoside binding site.

It belongs to the PNP/MTAP phosphorylase family. In terms of assembly, homotrimer.

It is found in the cytoplasm. It catalyses the reaction inosine + phosphate = alpha-D-ribose 1-phosphate + hypoxanthine. It carries out the reaction guanosine + phosphate = alpha-D-ribose 1-phosphate + guanine. The enzyme catalyses 2'-deoxyguanosine + phosphate = 2-deoxy-alpha-D-ribose 1-phosphate + guanine. The catalysed reaction is 2'-deoxyinosine + phosphate = 2-deoxy-alpha-D-ribose 1-phosphate + hypoxanthine. Its pathway is purine metabolism; purine nucleoside salvage. Catalyzes the phosphorolytic breakdown of the N-glycosidic bond in the beta-(deoxy)ribonucleoside molecules, with the formation of the corresponding free purine bases and pentose-1-phosphate. Preferentially acts on 6-oxopurine nucleosides including inosine and guanosine. This chain is Purine nucleoside phosphorylase (PNP), found in Bos taurus (Bovine).